The primary structure comprises 164 residues: Arginine repressor (164 aa).

It belongs to the ArgR family.

The protein resides in the cytoplasm. It functions in the pathway amino-acid biosynthesis; L-arginine biosynthesis [regulation]. Regulates arginine biosynthesis genes. This is Arginine repressor from Mycolicibacterium paratuberculosis (strain ATCC BAA-968 / K-10) (Mycobacterium paratuberculosis).